A 23-amino-acid polypeptide reads, in one-letter code: Magainin-B2 (23 aa).

In terms of tissue distribution, expressed by the skin glands.

Its subcellular location is the secreted. In terms of biological role, has antimicrobial activity against Gram-negative bacterium E.coli ATCC 25922 (MIC=50 uM) and against fungus C.albicans ATCC 90028 (MIC=100 uM). Has no hemolytic activity against human erythrocytes even at high concentrations. This is Magainin-B2 from Xenopus borealis (Kenyan clawed frog).